We begin with the raw amino-acid sequence, 218 residues long: Glutathione S-transferase Mu 2 (218 aa).

A GST N-terminal domain is found at 2 to 88; it reads PMTLGYWNIR…YIARKHNLCG (87 aa). Residue 7–8 participates in glutathione binding; that stretch reads YW. 2 positions are modified to phosphoserine: Ser-27 and Ser-44. Residues 43–46, Lys-50, 59–60, and 72–73 contribute to the glutathione site; these read RSQW, NL, and QS. The 119-residue stretch at 90–208 folds into the GST C-terminal domain; that stretch reads SEKEQIREDI…KSSRFLPRPV (119 aa). Tyr-116 serves as a coordination point for substrate.

This sequence belongs to the GST superfamily. Mu family. Homodimer. As to expression, muscle.

It is found in the cytoplasm. It carries out the reaction RX + glutathione = an S-substituted glutathione + a halide anion + H(+). The catalysed reaction is 11(S)-hydroxy-14(S),15(S)-epoxy-(5Z,8Z,12E)-eicosatrienoate + glutathione = (11S,15S)-dihydroxy-14(R)-S-glutathionyl-(5Z,8Z,12E)-eicosatrienoate. Functionally, conjugation of reduced glutathione to a wide number of exogenous and endogenous hydrophobic electrophiles. Participates in the formation of novel hepoxilin regioisomers. The sequence is that of Glutathione S-transferase Mu 2 from Homo sapiens (Human).